A 150-amino-acid chain; its full sequence is Dual specificity protein phosphatase 23 (150 aa).

In terms of domain architecture, Tyrosine-protein phosphatase spans 7–150; sequence NFSWVLPGRL…AVFQFYQRTK (144 aa). Catalysis depends on Cys-95, which acts as the Phosphocysteine intermediate.

The protein belongs to the protein-tyrosine phosphatase family. Non-receptor class dual specificity subfamily. As to expression, widely expressed. Highly expressed in spleen, prostate, colon, adrenal gland, mammary gland, thyroid and trachea. Expressed at lower level in uterus, small intestine, bladder, bone marrow, brain, spinal cord and stomach.

Its subcellular location is the cytoplasm. It is found in the cytosol. The protein localises to the nucleus. It carries out the reaction O-phospho-L-tyrosyl-[protein] + H2O = L-tyrosyl-[protein] + phosphate. The catalysed reaction is O-phospho-L-seryl-[protein] + H2O = L-seryl-[protein] + phosphate. It catalyses the reaction O-phospho-L-threonyl-[protein] + H2O = L-threonyl-[protein] + phosphate. In terms of biological role, protein phosphatase that mediates dephosphorylation of proteins phosphorylated on Tyr and Ser/Thr residues. In vitro, it can dephosphorylate p44-ERK1 (MAPK3) but not p54 SAPK-beta (MAPK10) in vitro. Able to enhance activation of JNK and p38 (MAPK14). This chain is Dual specificity protein phosphatase 23 (DUSP23), found in Homo sapiens (Human).